The primary structure comprises 328 residues: NAD(P)H-dependent pentose reductase (328 aa).

Residue Y50 is the Proton donor of the active site. H112 provides a ligand contact to substrate. NAD(+) contacts are provided by residues 174–175, 223–232, and 279–289; these read AN, SSFGPQSFVE, and KSNNVDRLKQN.

Belongs to the aldo/keto reductase family.

Pentose reductase with a broad substrate affinity involved in pentose catabolism. Has highest reductase activities with L-arabinose and D-xylose as substrates, and displays much lower activities with D-ribose, D-galactose and D-glucose. Has highest dehydrogenase activity with L-arabitol as substrate, followed by xylitol and D-sorbitol. May be responsible for the first step of the L-arabinose catabolic pathway. This is NAD(P)H-dependent pentose reductase (PRD1) from Pyricularia oryzae (strain 70-15 / ATCC MYA-4617 / FGSC 8958) (Rice blast fungus).